Here is a 133-residue protein sequence, read N- to C-terminus: Homeobox protein BarH-like 2 (133 aa).

The segment at residues 1–46 is a DNA-binding region (homeobox); the sequence is ELEKEFQKQKYLSTPDRLDLAQSLGLTQLQVKTWYQNRRMKWKKMV. The segment at 45-133 is disordered; it reads MVLKGGQEAP…VTSPEPPPSS (89 aa).

The protein belongs to the BAR homeobox family. Expressed in keratinizing epithelia such as wool follicle, tongue and esophagus. Expressed at low level in thymus. Not detected in spleen, skeletal muscle, brain, heart kidney, liver and lung.

It is found in the nucleus. Its function is as follows. Transcription factor. Binds optimally to the DNA consensus sequence 5'-YYTAATGRTTTTY-3'. May control the expression of neural adhesion molecules such as L1 or Ng-CAM during embryonic development of both the central and peripherical nervous system. May be involved in controlling adhesive processes in keratinizing epithelia. This chain is Homeobox protein BarH-like 2 (BARX2), found in Ovis aries (Sheep).